Here is a 196-residue protein sequence, read N- to C-terminus: Putative lipopolysaccharide biosynthesis O-acetyl transferase WbbJ (196 aa).

Belongs to the transferase hexapeptide repeat family.

It functions in the pathway bacterial outer membrane biogenesis; lipopolysaccharide biosynthesis. In terms of biological role, putative O-acetyltransferase that transfers an O-acetyl group to the O antigen. This is Putative lipopolysaccharide biosynthesis O-acetyl transferase WbbJ (wbbJ) from Escherichia coli (strain K12).